Consider the following 189-residue polypeptide: Large ribosomal subunit protein bL9 (189 aa).

Belongs to the bacterial ribosomal protein bL9 family.

Its function is as follows. Binds to the 23S rRNA. The chain is Large ribosomal subunit protein bL9 from Brucella canis (strain ATCC 23365 / NCTC 10854 / RM-666).